A 186-amino-acid polypeptide reads, in one-letter code: MLKIAWGITGCGDKLPEVVEIMKKLKNKYNLDVDIYLSKNAKIVVKWYKLWQVLEDEFYDLRVEVNANAPFLVGKLQTGKYDLFLVAPATANTTAKIAYGIADTLITNSVAQAMKAKVPVYIFPPDNKKGTVETILPGNKKLTLYMRDVDVENVERLRRMEGIEVLDKPEDIEKVILKHIEVKKQQ.

To M.jannaschii MJ0208.

This is an uncharacterized protein from Methanocaldococcus jannaschii (strain ATCC 43067 / DSM 2661 / JAL-1 / JCM 10045 / NBRC 100440) (Methanococcus jannaschii).